A 178-amino-acid polypeptide reads, in one-letter code: Acireductone dioxygenase 1 (178 aa).

4 residues coordinate Fe(2+): His84, His86, Glu90, and His130. 4 residues coordinate Ni(2+): His84, His86, Glu90, and His130.

The protein belongs to the acireductone dioxygenase (ARD) family. Fe(2+) serves as cofactor. The cofactor is Ni(2+).

It localises to the cytoplasm. Its subcellular location is the nucleus. It catalyses the reaction 1,2-dihydroxy-5-(methylsulfanyl)pent-1-en-3-one + O2 = 4-methylsulfanyl-2-oxobutanoate + formate + 2 H(+). The enzyme catalyses 1,2-dihydroxy-5-(methylsulfanyl)pent-1-en-3-one + O2 = 3-(methylsulfanyl)propanoate + CO + formate + 2 H(+). The protein operates within amino-acid biosynthesis; L-methionine biosynthesis via salvage pathway; L-methionine from S-methyl-5-thio-alpha-D-ribose 1-phosphate: step 5/6. Its function is as follows. Catalyzes 2 different reactions between oxygen and the acireductone 1,2-dihydroxy-3-keto-5-methylthiopentene (DHK-MTPene) depending upon the metal bound in the active site. Fe-containing acireductone dioxygenase (Fe-ARD) produces formate and 2-keto-4-methylthiobutyrate (KMTB), the alpha-ketoacid precursor of methionine in the methionine recycle pathway. Ni-containing acireductone dioxygenase (Ni-ARD) produces methylthiopropionate, carbon monoxide and formate, and does not lie on the methionine recycle pathway. The polypeptide is Acireductone dioxygenase 1 (Coprinopsis cinerea (strain Okayama-7 / 130 / ATCC MYA-4618 / FGSC 9003) (Inky cap fungus)).